A 239-amino-acid chain; its full sequence is Small ribosomal subunit protein uS3 (239 aa).

One can recognise a KH type-2 domain in the interval 39–107 (IRAALMKTLK…EVLINIVEVR (69 aa)). The interval 214–239 (AQDKKMAEQDHGGGGGDRRRRDRDAA) is disordered.

It belongs to the universal ribosomal protein uS3 family. Part of the 30S ribosomal subunit. Forms a tight complex with proteins S10 and S14.

Binds the lower part of the 30S subunit head. Binds mRNA in the 70S ribosome, positioning it for translation. This is Small ribosomal subunit protein uS3 from Methylocella silvestris (strain DSM 15510 / CIP 108128 / LMG 27833 / NCIMB 13906 / BL2).